The sequence spans 687 residues: Chloride channel protein ClC-Ka (687 aa).

5 consecutive transmembrane segments (helical) span residues 52 to 72 (FLVA…FAIG), 94 to 114 (LSWT…SQSI), 161 to 181 (IFLG…AYLG), 204 to 224 (AAAV…LFSI), and 236 to 256 (YWRG…LGVF). Positions 259, 261, 278, and 281 each coordinate Ca(2+). 6 helical membrane passes run 282–302 (IFFF…YLFC), 325–345 (PSYA…PGVG), 396–416 (FTIF…LILA), 417–437 (TTIP…AAIG), 458–478 (VNPI…SGAV), and 486–506 (LLAF…MAVL). At 507–687 (AANAISQNCQ…STLINPPAPK (181 aa)) the chain is on the cytoplasmic side. 2 consecutive CBS domains span residues 551-609 (MNCN…QPAS) and 626-687 (CPTQ…PAPK).

Belongs to the chloride channel (TC 2.A.49) family. CLCNKA subfamily. As to quaternary structure, homodimer. Interacts with BSND. As to expression, expressed predominantly in the kidney. Expressed strongly in the cortical thick ascending limb and the distal convoluted tubule, with minor expression in the S3 segment of the proximal tubule and the cortical collecting tubule.

The protein localises to the basolateral cell membrane. The enzyme catalyses chloride(in) = chloride(out). It carries out the reaction bromide(in) = bromide(out). The catalysed reaction is nitrate(in) = nitrate(out). It catalyses the reaction iodide(out) = iodide(in). With respect to regulation, activated by extracellular Ca(2+) and inhibited by extracellular acidic pH. Functionally, anion-selective channel permeable to small monovalent anions with ion selectivity for chloride &gt; bromide &gt; nitrate &gt; iodide. Forms a homodimeric channel where each subunit has its own ion conduction pathway. Conducts double-barreled currents controlled by two types of gates, two fast gates that control each subunit independently and a slow common gate that opens and shuts off both subunits simultaneously. Assembles with the regulatory subunit BSND/Barttin for sorting at the basolateral plasma membrane domain. CLCNKA:BSND channels are activated upon membrane hyperpolarization mostly controlled by fast gating. Mediates transepithelial chloride transport from the lumen to interstitial compartment along the thin ascending limb of Henle's loop, contributing to generation of hypertonic medullary interstitium as a countercurrent system to achieve urine concentration. Conducts chloride currents in the stria vascularis of the inner ear to establish the endocochlear potential necessary for normal hearing. This is Chloride channel protein ClC-Ka from Rattus norvegicus (Rat).